The sequence spans 623 residues: Chaperone protein DnaK (623 aa).

The residue at position 175 (threonine 175) is a Phosphothreonine; by autocatalysis. Residues 580-623 are disordered; that stretch reads PEGAQGAGFDPNNMGGANAGNASAGNDKKDDNVVDADFKVEDDK. Low complexity predominate over residues 591-604; the sequence is NNMGGANAGNASAG. Over residues 605-623 the composition is skewed to basic and acidic residues; that stretch reads NDKKDDNVVDADFKVEDDK.

Belongs to the heat shock protein 70 family.

In terms of biological role, acts as a chaperone. The sequence is that of Chaperone protein DnaK from Clostridium botulinum (strain Hall / ATCC 3502 / NCTC 13319 / Type A).